A 226-amino-acid chain; its full sequence is Fibrillarin-like rRNA/tRNA 2'-O-methyltransferase (226 aa).

S-adenosyl-L-methionine-binding positions include 85–86 (TT), 104–105 (EF), 129–130 (DA), and 149–152 (DVAQ).

The protein belongs to the methyltransferase superfamily. Fibrillarin family. As to quaternary structure, interacts with nop5. Component of box C/D small ribonucleoprotein (sRNP) particles that contain rpl7ae, FlpA and nop5, plus a guide RNA.

In terms of biological role, involved in pre-rRNA and tRNA processing. Utilizes the methyl donor S-adenosyl-L-methionine to catalyze the site-specific 2'-hydroxyl methylation of ribose moieties in rRNA and tRNA. Site specificity is provided by a guide RNA that base pairs with the substrate. Methylation occurs at a characteristic distance from the sequence involved in base pairing with the guide RNA. The sequence is that of Fibrillarin-like rRNA/tRNA 2'-O-methyltransferase from Thermococcus sibiricus (strain DSM 12597 / MM 739).